The sequence spans 251 residues: Small ribosomal subunit protein uS2B (251 aa).

N-acetylserine is present on Ser-2. Residues 214–225 (AVEEASATGATE) show a composition bias toward low complexity. The segment at 214–251 (AVEEASATGATEEATEEATEETTEATEWAEDNTENATW) is disordered. Over residues 226–251 (EATEEATEETTEATEWAEDNTENATW) the composition is skewed to acidic residues.

The protein belongs to the universal ribosomal protein uS2 family. As to quaternary structure, component of the small ribosomal subunit. Mature ribosomes consist of a small (40S) and a large (60S) subunit. The 40S subunit contains about 33 different proteins and 1 molecule of RNA (18S). The 60S subunit contains about 49 different proteins and 3 molecules of RNA (25S, 5.8S and 5S). Interacts with RPS21.

It localises to the cytoplasm. Required for the assembly and/or stability of the 40S ribosomal subunit. Required for the processing of the 20S rRNA-precursor to mature 18S rRNA in a late step of the maturation of 40S ribosomal subunits. This is Small ribosomal subunit protein uS2B from Vanderwaltozyma polyspora (strain ATCC 22028 / DSM 70294 / BCRC 21397 / CBS 2163 / NBRC 10782 / NRRL Y-8283 / UCD 57-17) (Kluyveromyces polysporus).